The sequence spans 154 residues: uncharacterized protein (154 aa).

An N-terminal signal peptide occupies residues 1–19 (MWSLKSTLCIALLVTYSVA). 2 ShKT domains span residues 67–102 (CADD…CGFC) and 113–150 (CVDS…CKLC). 6 cysteine pairs are disulfide-bonded: Cys67–Cys102, Cys75–Cys95, Cys82–Cys99, Cys113–Cys150, Cys120–Cys143, and Cys129–Cys147.

This is an uncharacterized protein from Caenorhabditis elegans.